The sequence spans 331 residues: 4-hydroxy-3-methylbut-2-enyl diphosphate reductase (331 aa).

Position 12 (C12) interacts with [4Fe-4S] cluster. H43 and H81 together coordinate (2E)-4-hydroxy-3-methylbut-2-enyl diphosphate. H43 and H81 together coordinate dimethylallyl diphosphate. The isopentenyl diphosphate site is built by H43 and H81. C103 provides a ligand contact to [4Fe-4S] cluster. H131 is a (2E)-4-hydroxy-3-methylbut-2-enyl diphosphate binding site. Position 131 (H131) interacts with dimethylallyl diphosphate. Isopentenyl diphosphate is bound at residue H131. E133 serves as the catalytic Proton donor. Position 170 (T170) interacts with (2E)-4-hydroxy-3-methylbut-2-enyl diphosphate. C198 is a [4Fe-4S] cluster binding site. Residues S226, N228, and S271 each contribute to the (2E)-4-hydroxy-3-methylbut-2-enyl diphosphate site. Residues S226, N228, and S271 each coordinate dimethylallyl diphosphate. Residues S226, N228, and S271 each contribute to the isopentenyl diphosphate site.

Belongs to the IspH family. Requires [4Fe-4S] cluster as cofactor.

It catalyses the reaction isopentenyl diphosphate + 2 oxidized [2Fe-2S]-[ferredoxin] + H2O = (2E)-4-hydroxy-3-methylbut-2-enyl diphosphate + 2 reduced [2Fe-2S]-[ferredoxin] + 2 H(+). The catalysed reaction is dimethylallyl diphosphate + 2 oxidized [2Fe-2S]-[ferredoxin] + H2O = (2E)-4-hydroxy-3-methylbut-2-enyl diphosphate + 2 reduced [2Fe-2S]-[ferredoxin] + 2 H(+). The protein operates within isoprenoid biosynthesis; dimethylallyl diphosphate biosynthesis; dimethylallyl diphosphate from (2E)-4-hydroxy-3-methylbutenyl diphosphate: step 1/1. Its pathway is isoprenoid biosynthesis; isopentenyl diphosphate biosynthesis via DXP pathway; isopentenyl diphosphate from 1-deoxy-D-xylulose 5-phosphate: step 6/6. Its function is as follows. Catalyzes the conversion of 1-hydroxy-2-methyl-2-(E)-butenyl 4-diphosphate (HMBPP) into a mixture of isopentenyl diphosphate (IPP) and dimethylallyl diphosphate (DMAPP). Acts in the terminal step of the DOXP/MEP pathway for isoprenoid precursor biosynthesis. The protein is 4-hydroxy-3-methylbut-2-enyl diphosphate reductase of Listeria monocytogenes serovar 1/2a (strain ATCC BAA-679 / EGD-e).